Reading from the N-terminus, the 625-residue chain is Mesothelin (625 aa).

Residues 1–35 (MALPTARPLLGSCGSPICSRSFLLLLLSLGWIPRL) form the signal peptide. An N-linked (GlcNAc...) asparagine glycan is attached at Asn93. Ser202 carries the phosphoserine modification. Cys304 and Cys328 are disulfide-bonded. N-linked (GlcNAc...) asparagine glycans are attached at residues Asn390, Asn488, and Asn517. Ser600 is lipidated: GPI-anchor amidated serine. Residues 601–625 (SRASLLGPGFVLIWIPALLPALRLS) constitute a propeptide, removed in mature form.

This sequence belongs to the mesothelin family. In terms of assembly, interacts with MUC16. Proteolytically cleaved by a furin-like convertase to generate megakaryocyte-potentiating factor (MPF), and the cleaved form of mesothelin. Highly expressed in lung and heart. Expressed at low levels in spleen, liver, kidney and testis. Present in lung (at protein level).

The protein resides in the cell membrane. It localises to the golgi apparatus. Its subcellular location is the secreted. Functionally, membrane-anchored forms may play a role in cellular adhesion. In terms of biological role, megakaryocyte-potentiating factor (MPF) may potentiate megakaryocyte colony formation. The sequence is that of Mesothelin (Msln) from Mus musculus (Mouse).